The chain runs to 478 residues: Serine hydroxymethyltransferase, cytosolic (478 aa).

An N6-(pyridoxal phosphate)lysine modification is found at K251.

This sequence belongs to the SHMT family. As to quaternary structure, homotetramer. Identified in complex with FAM175B and the other subunits of the BRISC complex, at least composed of FAM175B/ABRO1, BRCC3/BRCC36, BABAM2 and BABAM1/NBA1. Pyridoxal 5'-phosphate is required as a cofactor.

It is found in the cytoplasm. The catalysed reaction is (6R)-5,10-methylene-5,6,7,8-tetrahydrofolate + glycine + H2O = (6S)-5,6,7,8-tetrahydrofolate + L-serine. It functions in the pathway one-carbon metabolism; tetrahydrofolate interconversion. Its function is as follows. Interconversion of serine and glycine. The polypeptide is Serine hydroxymethyltransferase, cytosolic (Shmt1) (Mus musculus (Mouse)).